Here is an 885-residue protein sequence, read N- to C-terminus: Alanine--tRNA ligase (885 aa).

Residues histidine 574, histidine 578, cysteine 676, and histidine 680 each contribute to the Zn(2+) site.

Belongs to the class-II aminoacyl-tRNA synthetase family. It depends on Zn(2+) as a cofactor.

The protein resides in the cytoplasm. It catalyses the reaction tRNA(Ala) + L-alanine + ATP = L-alanyl-tRNA(Ala) + AMP + diphosphate. Its function is as follows. Catalyzes the attachment of alanine to tRNA(Ala) in a two-step reaction: alanine is first activated by ATP to form Ala-AMP and then transferred to the acceptor end of tRNA(Ala). Also edits incorrectly charged Ser-tRNA(Ala) and Gly-tRNA(Ala) via its editing domain. The chain is Alanine--tRNA ligase from Syntrophobacter fumaroxidans (strain DSM 10017 / MPOB).